The chain runs to 663 residues: Chaperone protein HtpG (663 aa).

Positions 1–352 (MTKQTLSFQA…SADLPLNVSR (352 aa)) are a; substrate-binding. Positions 218–228 (ELINPSDEKGG) are enriched in basic and acidic residues. Residues 218-237 (ELINPSDEKGGRQPGGMVKT) are disordered. The tract at residues 353–595 (ELLQESRDVK…DHGMSTQLAR (243 aa)) is b. The interval 596 to 663 (MLKQAGQAAP…YVKRVNALLV (68 aa)) is c.

This sequence belongs to the heat shock protein 90 family. Homodimer.

The protein localises to the cytoplasm. Functionally, molecular chaperone. Has ATPase activity. The chain is Chaperone protein HtpG from Albidiferax ferrireducens (strain ATCC BAA-621 / DSM 15236 / T118) (Rhodoferax ferrireducens).